The primary structure comprises 187 residues: MDRLIMGKYDVSGIQIHDMGLAKYINLNSYFNLHTGGRYSNYSAGKRNVNTIERLLNKLMRTEKWTGKKYSAYRVLKEAFEIVEQKTKQNPVQVLINAIENSAPREEVTRLKYGGIAVPKSVDVSPSRRLDEALRNICIGATSKSFKSKVPIEECLANEIILASRNDGNSYAVSKKEEIERVAASAR.

This sequence belongs to the universal ribosomal protein uS7 family. In terms of assembly, part of the 30S ribosomal subunit.

One of the primary rRNA binding proteins, it binds directly to 16S rRNA where it nucleates assembly of the head domain of the 30S subunit. Is located at the subunit interface close to the decoding center. This is Small ribosomal subunit protein uS7 from Picrophilus torridus (strain ATCC 700027 / DSM 9790 / JCM 10055 / NBRC 100828 / KAW 2/3).